The sequence spans 297 residues: tRNA dimethylallyltransferase (297 aa).

ATP is bound at residue 8-15 (GATASGKS). 10-15 (TASGKS) provides a ligand contact to substrate. The interval 33–36 (DSLS) is interaction with substrate tRNA.

The protein belongs to the IPP transferase family. As to quaternary structure, monomer. The cofactor is Mg(2+).

It catalyses the reaction adenosine(37) in tRNA + dimethylallyl diphosphate = N(6)-dimethylallyladenosine(37) in tRNA + diphosphate. Catalyzes the transfer of a dimethylallyl group onto the adenine at position 37 in tRNAs that read codons beginning with uridine, leading to the formation of N6-(dimethylallyl)adenosine (i(6)A). This chain is tRNA dimethylallyltransferase, found in Sulfurimonas denitrificans (strain ATCC 33889 / DSM 1251) (Thiomicrospira denitrificans (strain ATCC 33889 / DSM 1251)).